A 413-amino-acid chain; its full sequence is E3 ubiquitin-protein ligase makorin (413 aa).

2 consecutive C3H1-type zinc fingers follow at residues 2 to 29 (PRHE…HDVA) and 30 to 57 (TRNE…HTRP). The tract at residues 61–85 (ELPSCSTPQTSQNQQNLQNSGQRVR) is disordered. Residues 66 to 82 (STPQTSQNQQNLQNSGQ) show a composition bias toward low complexity. The C3H1-type 3 zinc finger occupies 138–167 (QAQLMMCPYHQKSGDCNRQDMDCPFAHGNY). The segment at 213-267 (CGICMENIFEKNLRFGILNGCQHCFCLDCIRQWRSKDQENVELATKTVRSCPECR) adopts an RING-type zinc-finger fold. The segment at 296–327 (NTKRKICKYYSNERSRGACPFGNKCFYKHQLP) adopts a C3H1-type 4 zinc-finger fold.

As to quaternary structure, component of a complex at least containing lep-2, lin-28 and the long non-coding RNA lep-5, which mediates the degradation of lin-28. Expressed in seam, tail tip, and other hypodermal cells, head and tail neurons, the pharynx, intestine and the developing hermaphrodite somatic gonad. Not expressed in body wall muscle cells.

The protein localises to the cytoplasm. The enzyme catalyses S-ubiquitinyl-[E2 ubiquitin-conjugating enzyme]-L-cysteine + [acceptor protein]-L-lysine = [E2 ubiquitin-conjugating enzyme]-L-cysteine + N(6)-ubiquitinyl-[acceptor protein]-L-lysine.. The protein operates within protein modification; protein ubiquitination. E3 ubiquitin ligase which catalyzes the covalent attachment of ubiquitin moieties onto substrate proteins. Promotes the larval to adult transition by binding to the long non-coding RNA lep-5 to target the heterochronic protein lin-28 for degradation by the proteasome. This association and degradation of lin-28 also controls the timing of the sexual differentiation of individual neurons in males including the AIM, AWA, ADF, ASJ and CEM neurons. Plays a role in governing the developmental timing of male tail tip morphogenesis. Plays a role in two aspects of male mating behavior: response to hermaphrodite contact and vulva location. May play a role in the detection of preferred food sources. The protein is E3 ubiquitin-protein ligase makorin of Caenorhabditis elegans.